We begin with the raw amino-acid sequence, 370 residues long: MDRDLHMRIVVKLGTSVLTDGTDRLHRPRMVDLARQMAQLREAGHEVVLVSSGAVLAGWERLGFPKRRRELTHKQALAAVGQGRLMHIYGQLFEIYDVPVAQTLLTRADLRDRVRYLNARATLLTCLEIGVLPIINENDAVAVDEIRVGDNDTLSALVANLVDAQLLVILSDIAGLYSADPRHNPEATLIDDVAAVNEQVYALAGAAGSHRGTGGMFTKIQAAELATRAGTTMVIAAGNEPNVLVRLVAGESVGTRFRPVSTRLESRKRWIMAERVRQAHIAVDAGAVQALTQQGRSLLPAGIVAVEGEWRRGQTVAIVAPDGQTIACGLCQYAAHEVAQIKGSRTSDIESILGYSYGAEVIHRDDMVAF.

ATP is bound at residue Lys12. Substrate is bound by residues Ser52, Asp139, and Asn151. ATP is bound by residues 171–172 (SD) and 213–219 (TGGMFTK). The PUA domain maps to 278-356 (QAHIAVDAGA…SDIESILGYS (79 aa)).

Belongs to the glutamate 5-kinase family.

It localises to the cytoplasm. It catalyses the reaction L-glutamate + ATP = L-glutamyl 5-phosphate + ADP. Its pathway is amino-acid biosynthesis; L-proline biosynthesis; L-glutamate 5-semialdehyde from L-glutamate: step 1/2. Functionally, catalyzes the transfer of a phosphate group to glutamate to form L-glutamate 5-phosphate. The chain is Glutamate 5-kinase from Herpetosiphon aurantiacus (strain ATCC 23779 / DSM 785 / 114-95).